We begin with the raw amino-acid sequence, 453 residues long: MTTDTIVAQATAPGRGGVGIIRVSGPQAAQVALEVTGKTLKARYAEYLPFKAQDGSELDQGIALFFPNPHSFTGEDVLELQGHGGPVVMDMLIKRILTISGVRPARPGEFSERAFLNDKMDLTQAEAIADLIDASSEEAAKSALQSLQGQFSKRIHTLVESLIHLRIYVEAAIDFPEEEIDFLADGKVAGDLQAIIDNLDAVRKEANQGAIMREGMKVVIAGRPNAGKSSLLNALSGKDSAIVTDIAGTTRDVLREHIHIDGMPLHIIDTAGLRDASDEVEKIGIERAWDEIRQADRVLFMVDGTTTDATDPKEIWPDFIDRLPEQIGITVIRNKADQTQESLGICHVSQPTLIRLSAKTGQGVEALRNHLKECMGFSGNSEGGFMARRRHLDALQRAAEHLLIGQEQLEGYMAGEILAEELRIAQQHLNEITGEFSSDDLLGRIFSSFCIGK.

(6S)-5-formyl-5,6,7,8-tetrahydrofolate contacts are provided by Arg-22, Glu-79, and Lys-119. The 162-residue stretch at 215 to 376 folds into the TrmE-type G domain; sequence GMKVVIAGRP…LRNHLKECMG (162 aa). A K(+)-binding site is contributed by Asn-225. GTP is bound by residues 225 to 230, 244 to 250, 269 to 272, and 334 to 337; these read NAGKSS, TDIAGTT, DTAG, and NKAD. Ser-229 contacts Mg(2+). K(+) is bound by residues Thr-244, Ile-246, and Thr-249. A Mg(2+)-binding site is contributed by Thr-250. Lys-453 lines the (6S)-5-formyl-5,6,7,8-tetrahydrofolate pocket.

This sequence belongs to the TRAFAC class TrmE-Era-EngA-EngB-Septin-like GTPase superfamily. TrmE GTPase family. In terms of assembly, homodimer. Heterotetramer of two MnmE and two MnmG subunits. Requires K(+) as cofactor.

It localises to the cytoplasm. Functionally, exhibits a very high intrinsic GTPase hydrolysis rate. Involved in the addition of a carboxymethylaminomethyl (cmnm) group at the wobble position (U34) of certain tRNAs, forming tRNA-cmnm(5)s(2)U34. This chain is tRNA modification GTPase MnmE, found in Vibrio vulnificus (strain YJ016).